The sequence spans 117 residues: Immunoglobulin heavy variable 3-21 (117 aa).

The first 19 residues, 1–19 (MELGLRWVFLVAILEGVQC), serve as a signal peptide directing secretion. Residues 20 to 44 (EVQLVESGGGLVKPGGSLRLSCAAS) form a framework-1 region. Positions 20-117 (EVQLVESGGG…EDTAVYYCAR (98 aa)) constitute an Ig-like domain. Cys-41 and Cys-115 are oxidised to a cystine. The complementarity-determining-1 stretch occupies residues 45–52 (GFTFSSYS). Positions 53–69 (MNWVRQAPGKGLEWVSS) are framework-2. Residues 70 to 77 (ISSSSSYI) are complementarity-determining-2. The framework-3 stretch occupies residues 78–115 (YYADSVKGRFTISRDNAKNSLYLQMNSLRAEDTAVYYC). Residues 116 to 117 (AR) are complementarity-determining-3.

Immunoglobulins are composed of two identical heavy chains and two identical light chains; disulfide-linked.

The protein resides in the secreted. The protein localises to the cell membrane. Functionally, v region of the variable domain of immunoglobulin heavy chains that participates in the antigen recognition. Immunoglobulins, also known as antibodies, are membrane-bound or secreted glycoproteins produced by B lymphocytes. In the recognition phase of humoral immunity, the membrane-bound immunoglobulins serve as receptors which, upon binding of a specific antigen, trigger the clonal expansion and differentiation of B lymphocytes into immunoglobulins-secreting plasma cells. Secreted immunoglobulins mediate the effector phase of humoral immunity, which results in the elimination of bound antigens. The antigen binding site is formed by the variable domain of one heavy chain, together with that of its associated light chain. Thus, each immunoglobulin has two antigen binding sites with remarkable affinity for a particular antigen. The variable domains are assembled by a process called V-(D)-J rearrangement and can then be subjected to somatic hypermutations which, after exposure to antigen and selection, allow affinity maturation for a particular antigen. This Homo sapiens (Human) protein is Immunoglobulin heavy variable 3-21.